The chain runs to 138 residues: Hexon-interlacing protein (138 aa).

Residues 100 to 127 are a coiled coil; sequence LLVLLAQLEALTQRLGELSKQVAQLREQ.

It belongs to the adenoviridae hexon-interlacing protein family. In terms of assembly, homotrimer. Interacts with hexon protein; this interaction tethers the hexons together. Self-interacts with adjacent proteins. Interacts with kinesin light chain KLC1; this interaction leads to capsid disruption at the nuclear pore complex during virus entry into host cell.

The protein resides in the virion. Its subcellular location is the host nucleus. Its function is as follows. Structural component of the virion that acts as a cement protein on the capsid exterior and forms triskelion structures consisting of three molecules that stabilize three hexon trimers at the center of each icosahedral facet and fixes the peripentonal hexons. Dispensable for assembly. During virus entry, recruits the anterograde motor kinesin-1 to the capsid docked at the nuclear pore complex thereby subjecting the docked capsid to a pulling force. The resulting tension leads to capsid disruption, dispersion of capsid fragments toward cell periphery and eventually viral DNA entry into the host nucleus. This chain is Hexon-interlacing protein, found in Human adenovirus B serotype 7 (HAdV-7).